The chain runs to 192 residues: NADH dehydrogenase [ubiquinone] iron-sulfur protein 3 (192 aa).

Belongs to the complex I 30 kDa subunit family. Complex I is composed of about 45 different subunits. This is a component of the iron-sulfur (IP) fragment of the enzyme.

Its subcellular location is the mitochondrion inner membrane. The catalysed reaction is a ubiquinone + NADH + 5 H(+)(in) = a ubiquinol + NAD(+) + 4 H(+)(out). Its function is as follows. Core subunit of the mitochondrial membrane respiratory chain NADH dehydrogenase (Complex I) that is believed to belong to the minimal assembly required for catalysis. Complex I functions in the transfer of electrons from NADH to the respiratory chain. The immediate electron acceptor for the enzyme is believed to be ubiquinone. This is NADH dehydrogenase [ubiquinone] iron-sulfur protein 3 (NAD9) from Beta vulgaris (Sugar beet).